A 120-amino-acid chain; its full sequence is Proteinase inhibitor (120 aa).

Residues Met-1–Ala-19 form the signal peptide. Residues Cys-43 and Cys-65 are joined by a disulfide bond.

It belongs to the protease inhibitor I38 family. In terms of assembly, monomer.

The protein localises to the periplasm. In terms of biological role, inhibitor of the extracellular proteases A, B, and C of E.chrysanthemi and the S.marcescens 50 kDa extracellular protease. It forms a non-covalent bond with the proteases and may prevent autocatalytic cleavage of the proteases zymogen in the periplasm. This chain is Proteinase inhibitor (inh), found in Dickeya chrysanthemi (Pectobacterium chrysanthemi).